A 326-amino-acid polypeptide reads, in one-letter code: 4-hydroxy-3-methylbut-2-enyl diphosphate reductase (326 aa).

Cys-22 contributes to the [4Fe-4S] cluster binding site. Residues His-51 and His-84 each contribute to the (2E)-4-hydroxy-3-methylbut-2-enyl diphosphate site. His-51 and His-84 together coordinate dimethylallyl diphosphate. The isopentenyl diphosphate site is built by His-51 and His-84. Cys-106 lines the [4Fe-4S] cluster pocket. His-134 provides a ligand contact to (2E)-4-hydroxy-3-methylbut-2-enyl diphosphate. His-134 lines the dimethylallyl diphosphate pocket. His-134 serves as a coordination point for isopentenyl diphosphate. The active-site Proton donor is the Glu-136. A (2E)-4-hydroxy-3-methylbut-2-enyl diphosphate-binding site is contributed by Thr-174. Position 204 (Cys-204) interacts with [4Fe-4S] cluster. Ser-232, Ser-233, Asn-234, and Ser-276 together coordinate (2E)-4-hydroxy-3-methylbut-2-enyl diphosphate. 4 residues coordinate dimethylallyl diphosphate: Ser-232, Ser-233, Asn-234, and Ser-276. Isopentenyl diphosphate-binding residues include Ser-232, Ser-233, Asn-234, and Ser-276.

This sequence belongs to the IspH family. It depends on [4Fe-4S] cluster as a cofactor.

It catalyses the reaction isopentenyl diphosphate + 2 oxidized [2Fe-2S]-[ferredoxin] + H2O = (2E)-4-hydroxy-3-methylbut-2-enyl diphosphate + 2 reduced [2Fe-2S]-[ferredoxin] + 2 H(+). The catalysed reaction is dimethylallyl diphosphate + 2 oxidized [2Fe-2S]-[ferredoxin] + H2O = (2E)-4-hydroxy-3-methylbut-2-enyl diphosphate + 2 reduced [2Fe-2S]-[ferredoxin] + 2 H(+). It functions in the pathway isoprenoid biosynthesis; dimethylallyl diphosphate biosynthesis; dimethylallyl diphosphate from (2E)-4-hydroxy-3-methylbutenyl diphosphate: step 1/1. The protein operates within isoprenoid biosynthesis; isopentenyl diphosphate biosynthesis via DXP pathway; isopentenyl diphosphate from 1-deoxy-D-xylulose 5-phosphate: step 6/6. In terms of biological role, catalyzes the conversion of 1-hydroxy-2-methyl-2-(E)-butenyl 4-diphosphate (HMBPP) into a mixture of isopentenyl diphosphate (IPP) and dimethylallyl diphosphate (DMAPP). Acts in the terminal step of the DOXP/MEP pathway for isoprenoid precursor biosynthesis. In Bordetella bronchiseptica (strain ATCC BAA-588 / NCTC 13252 / RB50) (Alcaligenes bronchisepticus), this protein is 4-hydroxy-3-methylbut-2-enyl diphosphate reductase.